The chain runs to 265 residues: Indole-3-glycerol phosphate synthase (265 aa).

This sequence belongs to the TrpC family.

It catalyses the reaction 1-(2-carboxyphenylamino)-1-deoxy-D-ribulose 5-phosphate + H(+) = (1S,2R)-1-C-(indol-3-yl)glycerol 3-phosphate + CO2 + H2O. It functions in the pathway amino-acid biosynthesis; L-tryptophan biosynthesis; L-tryptophan from chorismate: step 4/5. The chain is Indole-3-glycerol phosphate synthase from Syntrophobacter fumaroxidans (strain DSM 10017 / MPOB).